Reading from the N-terminus, the 345-residue chain is UDP-N-acetylenolpyruvoylglucosamine reductase (345 aa).

Residues 16–186 (LSVSASCIKV…TAVGIFLKKE (171 aa)) enclose the FAD-binding PCMH-type domain. Residue arginine 162 is part of the active site. Residue serine 232 is the Proton donor of the active site. Glutamate 328 is an active-site residue.

This sequence belongs to the MurB family. FAD serves as cofactor.

Its subcellular location is the cytoplasm. It catalyses the reaction UDP-N-acetyl-alpha-D-muramate + NADP(+) = UDP-N-acetyl-3-O-(1-carboxyvinyl)-alpha-D-glucosamine + NADPH + H(+). It functions in the pathway cell wall biogenesis; peptidoglycan biosynthesis. Its function is as follows. Cell wall formation. The polypeptide is UDP-N-acetylenolpyruvoylglucosamine reductase (Pectobacterium atrosepticum (strain SCRI 1043 / ATCC BAA-672) (Erwinia carotovora subsp. atroseptica)).